A 343-amino-acid polypeptide reads, in one-letter code: MLSLKMPQLLRVHQVPRVFWEEGIMSGYRCPTSSALDCVLSSFQMTNETVNIWTHFLPTWYFLWRLLALGSPGFRADPYHLPLLVFLLPACLYPFASCCAHTFSSMSPRARHICYFLDYGALSLYSLGCAFPYAAYSMPASWLHSRLHQLFVPAAALNSFLCTGLSCYSRFPELEYPGFSKALRTAAFAYPFLFDNLPLFYRLRLCWGGAHSCGRDALSSNHGYHLLCALLSGFLFAARLPERLAPGRFDYIGHSHQLFHICAVLGTHFQLEAVLADMGSRRAWLAVQEPTLGLGATVATLSLAVIGNLFIIAAFTASLLRMPGPCPLLQGSPLEEGLQAKQQ.

Topologically, residues 1 to 49 are cytoplasmic; the sequence is MLSLKMPQLLRVHQVPRVFWEEGIMSGYRCPTSSALDCVLSSFQMTNET. A helical membrane pass occupies residues 50-70; that stretch reads VNIWTHFLPTWYFLWRLLALG. The Extracellular segment spans residues 71 to 79; sequence SPGFRADPY. Residues 80–100 traverse the membrane as a helical segment; it reads HLPLLVFLLPACLYPFASCCA. The Cytoplasmic segment spans residues 101-112; sequence HTFSSMSPRARH. Residues 113–133 traverse the membrane as a helical segment; sequence ICYFLDYGALSLYSLGCAFPY. At 134–146 the chain is on the extracellular side; sequence AAYSMPASWLHSR. Residues 147 to 167 form a helical membrane-spanning segment; it reads LHQLFVPAAALNSFLCTGLSC. Residues 168–216 lie on the Cytoplasmic side of the membrane; sequence YSRFPELEYPGFSKALRTAAFAYPFLFDNLPLFYRLRLCWGGAHSCGRD. The helical transmembrane segment at 217 to 237 threads the bilayer; sequence ALSSNHGYHLLCALLSGFLFA. The Extracellular portion of the chain corresponds to 238–257; the sequence is ARLPERLAPGRFDYIGHSHQ. A helical transmembrane segment spans residues 258 to 278; the sequence is LFHICAVLGTHFQLEAVLADM. Over 279-291 the chain is Cytoplasmic; it reads GSRRAWLAVQEPT. A helical transmembrane segment spans residues 292-312; it reads LGLGATVATLSLAVIGNLFII. Topologically, residues 313–343 are extracellular; it reads AAFTASLLRMPGPCPLLQGSPLEEGLQAKQQ.

This sequence belongs to the ADIPOR family. Homodimer.

Its subcellular location is the cell membrane. In terms of biological role, plasma membrane progesterone (P4) receptor coupled to G proteins. Seems to act through a G(s) mediated pathway. Involved in neurosteroid inhibition of apoptosis. May be involved in regulating rapid P4 signaling in the nervous system. Also binds dehydroepiandrosterone (DHEA), pregnanolone, pregnenolone and allopregnanolone. The chain is Membrane progestin receptor delta from Mus musculus (Mouse).